Here is a 185-residue protein sequence, read N- to C-terminus: ATP-dependent protease subunit HslV (185 aa).

Thr-14 is an active-site residue. Ala-168, Cys-171, and Thr-174 together coordinate Na(+).

Belongs to the peptidase T1B family. HslV subfamily. A double ring-shaped homohexamer of HslV is capped on each side by a ring-shaped HslU homohexamer. The assembly of the HslU/HslV complex is dependent on binding of ATP.

It localises to the cytoplasm. The catalysed reaction is ATP-dependent cleavage of peptide bonds with broad specificity.. With respect to regulation, allosterically activated by HslU binding. Protease subunit of a proteasome-like degradation complex believed to be a general protein degrading machinery. The protein is ATP-dependent protease subunit HslV of Hyphomonas neptunium (strain ATCC 15444).